Here is a 37-residue protein sequence, read N- to C-terminus: Large ribosomal subunit protein bL36c (37 aa).

It belongs to the bacterial ribosomal protein bL36 family.

It localises to the plastid. The protein localises to the chloroplast. The protein is Large ribosomal subunit protein bL36c of Vitis vinifera (Grape).